A 427-amino-acid polypeptide reads, in one-letter code: Citrate synthase (427 aa).

At Lys-283 the chain carries N6-acetyllysine. Active-site residues include His-306 and Asp-363.

It belongs to the citrate synthase family. Homohexamer.

It catalyses the reaction oxaloacetate + acetyl-CoA + H2O = citrate + CoA + H(+). The protein operates within carbohydrate metabolism; tricarboxylic acid cycle; isocitrate from oxaloacetate: step 1/2. This Escherichia coli O6:H1 (strain CFT073 / ATCC 700928 / UPEC) protein is Citrate synthase (gltA).